The chain runs to 226 residues: PKHD-type hydroxylase Bpet2704 (226 aa).

In terms of domain architecture, Fe2OG dioxygenase spans 78–178 (KIFPPLFNRY…RISAFFWMQS (101 aa)). The Fe cation site is built by H96, D98, and H159. R169 contributes to the 2-oxoglutarate binding site.

Fe(2+) serves as cofactor. L-ascorbate is required as a cofactor.

The protein is PKHD-type hydroxylase Bpet2704 of Bordetella petrii (strain ATCC BAA-461 / DSM 12804 / CCUG 43448).